A 297-amino-acid chain; its full sequence is HTH-type transcriptional regulator ArgP (297 aa).

Residues 4–60 enclose the HTH lysR-type domain; sequence PDYRTLQALDAVIRERGFERAAQKLCITQSAVSQRIKQLENMFGQPLLVRTVPPRPT. A DNA-binding region (H-T-H motif) is located at residues 21–40; the sequence is FERAAQKLCITQSAVSQRIK.

Belongs to the LysR transcriptional regulatory family. As to quaternary structure, homodimer.

In terms of biological role, controls the transcription of genes involved in arginine and lysine metabolism. The protein is HTH-type transcriptional regulator ArgP of Enterobacter sp. (strain 638).